Reading from the N-terminus, the 358-residue chain is E3 ubiquitin-protein ligase RNF146 (358 aa).

An RING-type zinc finger spans residues 36 to 74; it reads CAICLQTCVHPVSLPCKHVFCYLCVKGASWLGKRCALCR. Residues Lys-84 and Lys-94 each participate in a glycyl lysine isopeptide (Lys-Gly) (interchain with G-Cter in ubiquitin) cross-link. The 77-residue stretch at 91 to 167 folds into the WWE domain; that stretch reads EELKAASRGN…EHGRRRKIKR (77 aa). The a glycoprotein site is built by Tyr-107, Arg-110, and Trp-114. Lys-130 is covalently cross-linked (Glycyl lysine isopeptide (Lys-Gly) (interchain with G-Cter in ubiquitin)). Tyr-144, Gln-153, Arg-163, and Lys-175 together coordinate a glycoprotein. Residue Lys-175 forms a Glycyl lysine isopeptide (Lys-Gly) (interchain with G-Cter in ubiquitin) linkage. Residues 253–358 form a disordered region; sequence GDNTAERSHR…PDGQCTVTEV (106 aa). Over residues 283 to 297 the composition is skewed to acidic residues; the sequence is SIEETESDASSDSED. A phosphoserine mark is found at Ser-289 and Ser-293. The segment covering 305-322 has biased composition (polar residues); that stretch reads HSLTQQRLLVSNANQTVP.

As to quaternary structure, can form homooligomers. Interacts with PARsylated AXIN1, AXIN2, BLZF1, CASC3, H1-2, IPO7, LIG3, NCL, PARP1, XRCC1, XRCC5 and XRCC6. Interacts with DDB1, DHX15, IQGAP1, LRPPRC, PARP2, PRKDC, RUVBL2, TNKS1 and TNKS2. Binding often leads to interactor ubiquitination, in the presence of the appropriate E1 and E2 enzymes, and proteasomal degradation. Ubiquitinated; autoubiquitinated. Autoubiquitination is enhanced upon poly(ADP-ribose)-binding.

The protein localises to the cytoplasm. Its subcellular location is the cytosol. The protein resides in the nucleus. It carries out the reaction S-ubiquitinyl-[E2 ubiquitin-conjugating enzyme]-L-cysteine + [acceptor protein]-L-lysine = [E2 ubiquitin-conjugating enzyme]-L-cysteine + N(6)-ubiquitinyl-[acceptor protein]-L-lysine.. It participates in protein modification; protein ubiquitination. Its function is as follows. E3 ubiquitin-protein ligase that specifically binds poly-ADP-ribosylated (PARsylated) proteins and mediates their ubiquitination and subsequent degradation. May regulate many important biological processes, such as cell survival and DNA damage response. Acts as an activator of the Wnt signaling pathway by mediating the ubiquitination of PARsylated AXIN1 and AXIN2, 2 key components of the beta-catenin destruction complex. Acts in cooperation with tankyrase proteins (TNKS and TNKS2), which mediate PARsylation of target proteins AXIN1, AXIN2, BLZF1, CASC3, TNKS and TNKS2. Recognizes and binds tankyrase-dependent PARsylated proteins via its WWE domain and mediates their ubiquitination, leading to their degradation. Different ubiquitin linkage types have been observed: TNKS2 undergoes ubiquitination at 'Lys-48' and 'Lys-63', while AXIN1 is only ubiquitinated at 'Lys-48'. May regulate TNKS and TNKS2 subcellular location, preventing aggregation at a centrosomal location. Neuroprotective protein. Protects the brain against N-methyl-D-aspartate (NMDA) receptor-mediated glutamate excitotoxicity and ischemia, by interfering with PAR-induced cell death, called parthanatos. Prevents nuclear translocation of AIFM1 in a PAR-binding dependent manner. Does not affect PARP1 activation. Protects against cell death induced by DNA damaging agents, such as N-methyl-N-nitro-N-nitrosoguanidine (MNNG) and rescues cells from G1 arrest. Promotes cell survival after gamma-irradiation. Facilitates DNA repair. This is E3 ubiquitin-protein ligase RNF146 (RNF146) from Pongo abelii (Sumatran orangutan).